Here is an 83-residue protein sequence, read N- to C-terminus: Putative defensin-like protein 111 (83 aa).

The first 24 residues, 1 to 24, serve as a signal peptide directing secretion; it reads MAITKKILLPFVLTILFVISSVHC. 4 cysteine pairs are disulfide-bonded: cysteine 40–cysteine 80, cysteine 46–cysteine 69, cysteine 54–cysteine 78, and cysteine 58–cysteine 79.

This sequence belongs to the DEFL family.

It localises to the secreted. This Arabidopsis thaliana (Mouse-ear cress) protein is Putative defensin-like protein 111 (LCR50).